The primary structure comprises 448 residues: uncharacterized protein (448 aa).

12 helical membrane-spanning segments follow: residues proline 14–isoleucine 34, threonine 59–alanine 79, valine 87–asparagine 107, glycine 120–alanine 140, glycine 148–valine 168, serine 171–leucine 191, isoleucine 250–threonine 270, leucine 288–valine 308, isoleucine 316–isoleucine 333, threonine 338–phenylalanine 358, phenylalanine 392–phenylalanine 412, and phenylalanine 417–alanine 437.

It belongs to the major facilitator superfamily. TCR/Tet family.

Its subcellular location is the endoplasmic reticulum. It is found in the membrane. This is an uncharacterized protein from Schizosaccharomyces pombe (strain 972 / ATCC 24843) (Fission yeast).